The following is an 877-amino-acid chain: MMESLTVNENTINEFEIKNDIIIEQQQIQSKTSIPLLNIKDGNTTTTNTINEINNNNNNIETSTMSRKSLMTPSATYESLIRQQKTKDCNLTVKVFEARNLIEARLRKREMVKNGKSFKRAQNLLTEISSPNLMTFSDTTDPYCTVQLEKQKQRTRTIPKKLNPFWCEEFQLEISDPASAKLVLSVMDEKKYSNDEHIGKLVIPINTLKDQKERELWFPLTQPQSSKKVPQIQILFNFKPISLTDPSQPGHIQWKVLFGRNLSHSLATPLPSMSAASMGGSTSTENISNVYTNTTPFINWSVRSKKGDIVIDEEGIAWQDALTNGITRELKDSIECITFTLWRYEPKTFSDDGDISGLKSPRGTNSSASGSGFIPSTPPPSSHQKSNDTTATTTPSSTPSTPISPSSQSNNIKTPDSKTRSSSNASTNTPQTTPKSTGTSGGPAPPETINLSSSINSTSSLISNGSINVIDSSNNLHHHHNNGTNIMNPLKDGYEQYFIGQGIVLASHIDIEKPNDQWLCLYPKQTLDNKFGDIRLKLKYSEEVVLPLQSYQPLLELLQQENLYTITLLGKVTKHRESVSNNLIRVFEKTGKCLYLLKSLTDHEIDSTNNPDIIFRGNSLATKSVDLFMKLIGIPYLSQTIGPLIKKIYSSKKSCEIDPTKLEKGEDIKKNCKNLLSWVKKMTTAILSSVNNCPGPLREVFKSIQDKVVQRYPKDEITRYTAVSGFIFLRFFCPAILAPKLFDLMPDHPGIKTTRSLILIAKTLQNLANQVEFGEYKEDFMKDMNRFVIDNMENMKSFINTLSTVPADCPPGALQSPIILEKELACLYRHLIKQRQDMAEEMESTESEPKTQQEKDSFGKLIKILNSLDEDVQLASN.

The C2 domain occupies 72–218 (TPSATYESLI…KDQKERELWF (147 aa)). The interval 350-456 (SDDGDISGLK…ETINLSSSIN (107 aa)) is disordered. Positions 389 to 409 (TTATTTPSSTPSTPISPSSQS) are enriched in low complexity. Positions 410 to 425 (NNIKTPDSKTRSSSNA) are enriched in polar residues. 2 stretches are compositionally biased toward low complexity: residues 426 to 438 (STNT…KSTG) and 447 to 456 (ETINLSSSIN). A Ras-GAP domain is found at 591–802 (GKCLYLLKSL…ENMKSFINTL (212 aa)). Residues 820–848 (LEKELACLYRHLIKQRQDMAEEMESTESE) are a coiled coil.

Functionally, may function as a Ras GTPase-activating protein. The polypeptide is Probable Ras GTPase-activating-like protein ngap (ngap) (Dictyostelium discoideum (Social amoeba)).